The sequence spans 859 residues: MKLKDTKSRPKQSSYGKFQTKGIKVVGKWKEVKIDPNMFADGQMDDLVCFEELTDYQLVSPAKNPSSLFSKEAPKRKAQAVSEEEEEEEGESSSPKKKIKLKKSKNVATEGTSTQKEFEVKDPELEAQGDGMVCDDPEAGEMTSENLVQTAPKKKKNKAKKGLEPSQSTAAKVPKKAKTWIPEVHDQKADVSAWKDLFVPRPVLRALSFLGFSAPTPIQVLTLAPAIRDKLDILGAAETGSGKTLAFAIPMIHAVLQWQKRNAAPPPSNTEAPPGETRPEAGAETRSPGKAEAESDALPDDTVIESEALPSDTAAEARAKTGGTVSDQALLFGDDDAGEGPSSLIREKPVPKQNENEEENLDKEQTGNLKQELDDKSATCKTYPKRPLLGLVLTPTRELAVQVKQHIDAVARFTGIKTAILVGGMSTQKQQRMLNRRPEIVVATPGRLWELIKEKHYHLRNLRQLRCLVVDEADRMVEKGHFAELSQLLEMLNDSQYNPKRQTLVFSATLTLVHQAPARILHKKHTKKMDKTAKLDLLMQKIGMRGKPKVIDLTRNEATVETLTETKIHCETDEKDFYLYYFLMQYPGRSLVFANSISCIKRLSGLLKVLDIMPLTLHACMHQKQRLRNLEQFARLEDCVLLATDVAARGLDIPKVQHVIHYQVPRTSEIYVHRSGRTARATNEGLSLMLIGPEDVINFKKIYKTLKKDEDIPLFPVQTKYMDVVKERIRLARQIEKSEYRNFQACLHNSWIEQAAAALEIELEEDMYKGGKADQQEERRRQKQMKVLKKELRHLLSQPLFTESQKTKYPTQSGKPPLLVSAPSKSESALSCLSKQRKKKTKKPKEPQPEQPQPSTSAN.

N6-acetyllysine is present on K17. A Phosphoserine modification is found at S60. Residues 61 to 175 are disordered; it reads PAKNPSSLFS…SQSTAAKVPK (115 aa). At K71 the chain carries N6-acetyllysine. A phosphoserine mark is found at S82 and S94. The segment covering 82–91 has biased composition (acidic residues); that stretch reads SEEEEEEEGE. Positions 95–105 are enriched in basic residues; sequence PKKKIKLKKSK. Residues 106-115 show a composition bias toward polar residues; the sequence is NVATEGTSTQ. A Q motif motif is present at residues 192–220; it reads SAWKDLFVPRPVLRALSFLGFSAPTPIQV. The Helicase ATP-binding domain occupies 224–528; sequence APAIRDKLDI…RILHKKHTKK (305 aa). 237 to 244 provides a ligand contact to ATP; it reads AETGSGKT. Residues 262-374 form a disordered region; the sequence is NAAPPPSNTE…QTGNLKQELD (113 aa). Positions 277–293 are enriched in basic and acidic residues; the sequence is TRPEAGAETRSPGKAEA. Residues S287 and S295 each carry the phosphoserine modification. Positions 294-304 are enriched in acidic residues; sequence ESDALPDDTVI. T302 bears the Phosphothreonine mark. Residue K370 forms a Glycyl lysine isopeptide (Lys-Gly) (interchain with G-Cter in SUMO2) linkage. Positions 471-474 match the DEAD box motif; it reads DEAD. The region spanning 578–723 is the Helicase C-terminal domain; sequence YLYYFLMQYP…LFPVQTKYMD (146 aa). Glycyl lysine isopeptide (Lys-Gly) (interchain with G-Cter in SUMO2) cross-links involve residues K624, K808, and K825. Composition is skewed to polar residues over residues 799–814 and 823–834; these read PLFTESQKTKYPTQSG and PSKSESALSCLS. A disordered region spans residues 799 to 859; it reads PLFTESQKTK…EQPQPSTSAN (61 aa).

Belongs to the DEAD box helicase family. DDX24/MAK5 subfamily. In terms of assembly, interacts with FADD. Interacts with RIPK1; this interaction disrupts RLR signaling activation of IFN-dependent transcription factor IRF7. Interacts with NIP7. Interacts with EP300; this interaction prevents TP53 acetylation mediated by EP300. Ubiquitinated by MDM2 without targeting DDX24 for proteasomal degradation. Instead, polyubiquitylated DDX24 promotes interaction with NIP7, a component of pre-rRNP processing complex, and associates with pre-rRNA molecules and pre-ribosomal particles.

It localises to the cytoplasm. The protein localises to the nucleus. It catalyses the reaction ATP + H2O = ADP + phosphate + H(+). Its function is as follows. ATP-dependent RNA helicase that plays a role in various aspects of RNA metabolism including pre-mRNA splicing and is thereby involved in different biological processes such as cell cycle regulation or innate immunity. Plays an inhibitory role in TP53 transcriptional activity and subsequently in TP53 controlled cell growth arrest and senescence by inhibiting its EP300 mediated acetylation. Negatively regulates cytosolic RNA-mediated innate immune signaling at least in part by affecting RIPK1/IRF7 interactions. Alternatively, possesses antiviral activity by recognizing gammaherpesvirus transcripts in the context of lytic reactivation. Plays an essential role in cell cycle regulation in vascular smooth muscle cells by interacting with and regulating FANCA (Fanconi anemia complementation group A) mRNA. This chain is ATP-dependent RNA helicase DDX24 (DDX24), found in Pongo abelii (Sumatran orangutan).